The following is a 49-amino-acid chain: Large ribosomal subunit protein bL33B (49 aa).

It belongs to the bacterial ribosomal protein bL33 family.

The chain is Large ribosomal subunit protein bL33B from Geobacillus thermodenitrificans (strain NG80-2).